Consider the following 304-residue polypeptide: Homoserine kinase (304 aa).

86–96 (PLARGLGSSAA) contributes to the ATP binding site.

This sequence belongs to the GHMP kinase family. Homoserine kinase subfamily.

It is found in the cytoplasm. The enzyme catalyses L-homoserine + ATP = O-phospho-L-homoserine + ADP + H(+). The protein operates within amino-acid biosynthesis; L-threonine biosynthesis; L-threonine from L-aspartate: step 4/5. Its function is as follows. Catalyzes the ATP-dependent phosphorylation of L-homoserine to L-homoserine phosphate. The polypeptide is Homoserine kinase (Carboxydothermus hydrogenoformans (strain ATCC BAA-161 / DSM 6008 / Z-2901)).